The chain runs to 275 residues: Phosphonoacetaldehyde hydrolase (275 aa).

The active-site Nucleophile is the D15. Mg(2+)-binding residues include D15 and A17. K56 acts as the Schiff-base intermediate with substrate in catalysis. D189 provides a ligand contact to Mg(2+).

It belongs to the HAD-like hydrolase superfamily. PhnX family. As to quaternary structure, homodimer. It depends on Mg(2+) as a cofactor.

The catalysed reaction is phosphonoacetaldehyde + H2O = acetaldehyde + phosphate + H(+). Involved in phosphonate degradation. This is Phosphonoacetaldehyde hydrolase from Pseudomonas putida (strain ATCC 700007 / DSM 6899 / JCM 31910 / BCRC 17059 / LMG 24140 / F1).